The primary structure comprises 128 residues: RutC family protein BUsg_359 (128 aa).

It belongs to the RutC family.

This is RutC family protein BUsg_359 from Buchnera aphidicola subsp. Schizaphis graminum (strain Sg).